The following is a 249-amino-acid chain: Probable hydroxyacylglutathione hydrolase ECU02_0580 (249 aa).

7 residues coordinate Zn(2+): His75, His77, Asp79, His80, His126, Asp144, and His183. Substrate-binding positions include 183-185 (HDY) and 240-243 (RERK).

It belongs to the metallo-beta-lactamase superfamily. Glyoxalase II family. Zn(2+) serves as cofactor.

Its subcellular location is the cytoplasm. It localises to the nucleus. The catalysed reaction is an S-(2-hydroxyacyl)glutathione + H2O = a 2-hydroxy carboxylate + glutathione + H(+). It functions in the pathway secondary metabolite metabolism; methylglyoxal degradation; (R)-lactate from methylglyoxal: step 2/2. Thiolesterase that catalyzes the hydrolysis of S-D-lactoyl-glutathione to form glutathione and D-lactic acid. The protein is Probable hydroxyacylglutathione hydrolase ECU02_0580 of Encephalitozoon cuniculi (strain GB-M1) (Microsporidian parasite).